The sequence spans 645 residues: Fructose-1,6-bisphosphatase class 3 (645 aa).

It belongs to the FBPase class 3 family. Mn(2+) serves as cofactor.

The enzyme catalyses beta-D-fructose 1,6-bisphosphate + H2O = beta-D-fructose 6-phosphate + phosphate. The protein operates within carbohydrate biosynthesis; gluconeogenesis. In Fusobacterium nucleatum subsp. nucleatum (strain ATCC 25586 / DSM 15643 / BCRC 10681 / CIP 101130 / JCM 8532 / KCTC 2640 / LMG 13131 / VPI 4355), this protein is Fructose-1,6-bisphosphatase class 3.